Reading from the N-terminus, the 96-residue chain is Protein Vpr (96 aa).

A homooligomerization region spans residues 1–42; it reads MEQAPEDQGPQREPYNEWTLELLEELKSEAVRHFPRIWLHNL. 3 positions are modified to phosphoserine; by host: S79, S94, and S96.

This sequence belongs to the HIV-1 VPR protein family. Homooligomer, may form homodimer. Interacts with p6-gag region of the Pr55 Gag precursor protein through a (Leu-X-X)4 motif near the C-terminus of the P6gag protein. Interacts with host UNG. May interact with host RAD23A/HHR23A. Interacts with host VPRBP/DCAF1, leading to hijack the CUL4A-RBX1-DDB1-DCAF1/VPRBP complex, mediating ubiquitination of host proteins such as TERT and ZGPAT and arrest of the cell cycle in G2 phase. Post-translationally, phosphorylated on several residues by host. These phosphorylations regulate VPR activity for the nuclear import of the HIV-1 pre-integration complex.

Its subcellular location is the virion. It is found in the host nucleus. The protein localises to the host extracellular space. Functionally, during virus replication, may deplete host UNG protein, and incude G2-M cell cycle arrest. Acts by targeting specific host proteins for degradation by the 26S proteasome, through association with the cellular CUL4A-DDB1 E3 ligase complex by direct interaction with host VPRPB/DCAF-1. Cell cycle arrest reportedly occurs within hours of infection and is not blocked by antiviral agents, suggesting that it is initiated by the VPR carried into the virion. Additionally, VPR induces apoptosis in a cell cycle dependent manner suggesting that these two effects are mechanistically linked. Detected in the serum and cerebrospinal fluid of AIDS patient, VPR may also induce cell death to bystander cells. Its function is as follows. During virus entry, plays a role in the transport of the viral pre-integration (PIC) complex to the host nucleus. This function is crucial for viral infection of non-dividing macrophages. May act directly at the nuclear pore complex, by binding nucleoporins phenylalanine-glycine (FG)-repeat regions. This chain is Protein Vpr, found in Homo sapiens (Human).